Consider the following 426-residue polypeptide: Chromatin structure-remodeling complex subunit SFH1 (426 aa).

Position 78 is a phosphoserine (Ser-78). Positions 201-242 are interaction with STH1; it reads AIMIPITLDIEHMGHTIKDQFLWNYNDDSISPEEFASIYCKD.

Belongs to the SNF5 family. In terms of assembly, interacts directly with STH1. Component of the two forms of the RSC complex composed of at least either RSC1 or RSC2, and ARP7, ARP9, LDB7, NPL6, RSC3, RSC30, RSC4, RSC58, RSC6, RSC8, RSC9, SFH1, STH1, HTL1 and probably RTT102. The complexes interact with histone and histone variant components of centromeric chromatin. In terms of processing, phosphorylated in the G1 phase.

The protein localises to the nucleus. Its function is as follows. Component of the chromatin structure-remodeling complex (RSC), which is involved in transcription regulation and nucleosome positioning. RSC is responsible for the transfer of a histone octamer from a nucleosome core particle to naked DNA. The reaction requires ATP and involves an activated RSC-nucleosome intermediate. Remodeling reaction also involves DNA translocation, DNA twist and conformational change. As a reconfigurer of centromeric and flanking nucleosomes, RSC complex is required both for proper kinetochore function in chromosome segregation and, via a PKC1-dependent signaling pathway, for organization of the cellular cytoskeleton. This subunit is essential for mitotic growth and required for cell cycle progression. The polypeptide is Chromatin structure-remodeling complex subunit SFH1 (SFH1) (Saccharomyces cerevisiae (strain ATCC 204508 / S288c) (Baker's yeast)).